The sequence spans 519 residues: Baeyer-Villiger monooxygenase (519 aa).

FAD is bound by residues Glu-41, 49-52, Asp-61, Tyr-67, and Val-110; that span reads TWRD. 59–61 contacts NADP(+); that stretch reads ACD. NADP(+)-binding positions include 183 to 189, 206 to 207, and 292 to 293; these read TGASAIQ, RT, and KR. An FAD-binding site is contributed by Met-399. Positions 499–519 are disordered; sequence GAKAAEADTGADTGADAEVSA.

It belongs to the FAD-binding monooxygenase family. It depends on FAD as a cofactor.

In terms of biological role, catalyzes a Baeyer-Villiger oxidation reaction, i.e. the insertion of an oxygen atom into a carbon-carbon bond adjacent to a carbonyl, which converts ketones to esters or lactones using NADPH and/or NADH as an electron donor. Thus, can convert bicyclo[3.2.0]hept-2-en-6-one into the oxidative lactone products 2-oxabicyclo[3.3.0]oct-6-en-3-one and 3-oxabicyclo[3.3.0]oct-6-en-2-one. Is also able to catalyze the sulfoxidation of methyl phenyl sulfide (thioanisole). The polypeptide is Baeyer-Villiger monooxygenase (Streptomyces coelicolor (strain ATCC BAA-471 / A3(2) / M145)).